The primary structure comprises 207 residues: Ribosomal RNA small subunit methyltransferase G (207 aa).

S-adenosyl-L-methionine-binding positions include glycine 74, phenylalanine 79, 124-125, and arginine 138; that span reads VE.

Belongs to the methyltransferase superfamily. RNA methyltransferase RsmG family.

It localises to the cytoplasm. The catalysed reaction is guanosine(527) in 16S rRNA + S-adenosyl-L-methionine = N(7)-methylguanosine(527) in 16S rRNA + S-adenosyl-L-homocysteine. Specifically methylates the N7 position of guanine in position 527 of 16S rRNA. In Hyphomonas neptunium (strain ATCC 15444), this protein is Ribosomal RNA small subunit methyltransferase G.